Reading from the N-terminus, the 636-residue chain is Rust resistance kinase Lr10 (636 aa).

Positions 1-24 are cleaved as a signal peptide; it reads MSKLLVIALLLLPLINHGIYLATA. Over 25–276 the chain is Extracellular; the sequence is WDDQDFFKYC…MPDPHGSHIK (252 aa). N-linked (GlcNAc...) asparagine glycosylation is found at asparagine 56, asparagine 177, and asparagine 222. Residues 277-297 form a helical membrane-spanning segment; it reads VIAATSSVAAFVALLLTVATV. The Cytoplasmic portion of the chain corresponds to 298 to 636; it reads LYLSLKTRYN…FVSSENELMS (339 aa). In terms of domain architecture, Protein kinase spans 339 to 628; the sequence is RRFKEKVGQG…SLQMPPKPFV (290 aa). Residues 345 to 353 and lysine 367 each bind ATP; that span reads VGQGGFGSV. Aspartate 466 functions as the Proton acceptor in the catalytic mechanism.

Belongs to the protein kinase superfamily. Ser/Thr protein kinase family. In terms of tissue distribution, specifically expressed in the aerial parts of the plant.

The protein localises to the cell membrane. The enzyme catalyses L-seryl-[protein] + ATP = O-phospho-L-seryl-[protein] + ADP + H(+). It catalyses the reaction L-threonyl-[protein] + ATP = O-phospho-L-threonyl-[protein] + ADP + H(+). This chain is Rust resistance kinase Lr10, found in Triticum aestivum (Wheat).